Consider the following 185-residue polypeptide: Ribosome-recycling factor (185 aa).

The protein belongs to the RRF family.

It localises to the cytoplasm. Responsible for the release of ribosomes from messenger RNA at the termination of protein biosynthesis. May increase the efficiency of translation by recycling ribosomes from one round of translation to another. The protein is Ribosome-recycling factor of Thioalkalivibrio sulfidiphilus (strain HL-EbGR7).